Here is a 149-residue protein sequence, read N- to C-terminus: Nucleoside diphosphate kinase (149 aa).

ATP contacts are provided by Lys-9, Phe-57, Arg-85, Thr-91, Arg-102, and Asn-112. His-115 (pros-phosphohistidine intermediate) is an active-site residue.

It belongs to the NDK family. As to quaternary structure, homotetramer. It depends on Mg(2+) as a cofactor.

The protein resides in the cytoplasm. It carries out the reaction a 2'-deoxyribonucleoside 5'-diphosphate + ATP = a 2'-deoxyribonucleoside 5'-triphosphate + ADP. The enzyme catalyses a ribonucleoside 5'-diphosphate + ATP = a ribonucleoside 5'-triphosphate + ADP. In terms of biological role, major role in the synthesis of nucleoside triphosphates other than ATP. The ATP gamma phosphate is transferred to the NDP beta phosphate via a ping-pong mechanism, using a phosphorylated active-site intermediate. This is Nucleoside diphosphate kinase from Microcystis aeruginosa (strain NIES-843 / IAM M-2473).